The chain runs to 145 residues: Large ribosomal subunit protein bL9 (145 aa).

The protein belongs to the bacterial ribosomal protein bL9 family.

Binds to the 23S rRNA. This chain is Large ribosomal subunit protein bL9, found in Mesomycoplasma hyopneumoniae (strain J / ATCC 25934 / NCTC 10110) (Mycoplasma hyopneumoniae).